Consider the following 141-residue polypeptide: Small ribosomal subunit protein uS19 (141 aa).

Belongs to the universal ribosomal protein uS19 family.

Functionally, protein S19 forms a complex with S13 that binds strongly to the 16S ribosomal RNA. This chain is Small ribosomal subunit protein uS19, found in Halorubrum lacusprofundi (strain ATCC 49239 / DSM 5036 / JCM 8891 / ACAM 34).